A 146-amino-acid polypeptide reads, in one-letter code: PTS system fructose-specific EIIA component (146 aa).

The region spanning 1–124 (MISVIISGHG…NLKAMSQQSF (124 aa)) is the PTS EIIA type-4 domain. The Tele-phosphohistidine intermediate role is filled by His-9. Phosphohistidine; by HPr is present on His-9.

It is found in the cytoplasm. Its function is as follows. The phosphoenolpyruvate-dependent sugar phosphotransferase system (sugar PTS), a major carbohydrate active transport system, catalyzes the phosphorylation of incoming sugar substrates concomitantly with their translocation across the cell membrane. The enzyme II LevDE PTS system is involved in fructose transport. Functionally, levD and LevE act as negative regulators of the levanase operon. They may be involved in a PTS-mediated phosphorylation of a regulator. This chain is PTS system fructose-specific EIIA component, found in Bacillus subtilis (strain 168).